The chain runs to 318 residues: MAEFKHVTVLLKEAVAGLNVQPTGTYVDATLGGGGHTQAILQQLVDGHLYSFDQDQTAIDYNKEHLKTAIEQQKLTLVEDNFRNLKAELNSYNVKHVNGILYDLGVSSPQFDDAKRGFSYQHDAPLDMRMNQEQKLSAMEVVNEWPYERLVKILYRYGEEKFAKSIARKIEQRRKVAPIKTTFELVDVIKEGIPAAARRHGGHPAKKSFQAIRIAVNDELGALEESLEQALDLLDVGGRISVITFQSLEDRLVKTMFREKTSLSGDVPQGLPVIPAGMEPNFKLINKKPIVASDEELAANHRAHSAKLRIIEKIREGK.

Residues 34–36 (GGH), Asp-53, Phe-82, Asp-103, and Gln-110 contribute to the S-adenosyl-L-methionine site.

This sequence belongs to the methyltransferase superfamily. RsmH family.

The protein localises to the cytoplasm. It carries out the reaction cytidine(1402) in 16S rRNA + S-adenosyl-L-methionine = N(4)-methylcytidine(1402) in 16S rRNA + S-adenosyl-L-homocysteine + H(+). Functionally, specifically methylates the N4 position of cytidine in position 1402 (C1402) of 16S rRNA. This is Ribosomal RNA small subunit methyltransferase H from Limosilactobacillus reuteri (strain DSM 20016) (Lactobacillus reuteri).